A 494-amino-acid chain; its full sequence is Probable cytosol aminopeptidase (494 aa).

Mn(2+)-binding residues include Lys-260 and Asp-265. Lys-272 is a catalytic residue. Mn(2+)-binding residues include Asp-283, Asp-342, and Glu-344. The active site involves Arg-346.

Belongs to the peptidase M17 family. It depends on Mn(2+) as a cofactor.

The protein resides in the cytoplasm. The enzyme catalyses Release of an N-terminal amino acid, Xaa-|-Yaa-, in which Xaa is preferably Leu, but may be other amino acids including Pro although not Arg or Lys, and Yaa may be Pro. Amino acid amides and methyl esters are also readily hydrolyzed, but rates on arylamides are exceedingly low.. It carries out the reaction Release of an N-terminal amino acid, preferentially leucine, but not glutamic or aspartic acids.. Presumably involved in the processing and regular turnover of intracellular proteins. Catalyzes the removal of unsubstituted N-terminal amino acids from various peptides. The chain is Probable cytosol aminopeptidase from Bacillus cereus (strain ATCC 10987 / NRS 248).